The primary structure comprises 429 residues: tRNA(Ile2) 2-agmatinylcytidine synthetase TiaS (429 aa).

The tract at residues 403–429 (KPPERPLHPSKSLEPPSTPIHSDTISL) is disordered.

Belongs to the TiaS family.

Its subcellular location is the cytoplasm. The catalysed reaction is cytidine(34) in tRNA(Ile2) + agmatine + ATP + H2O = 2-agmatinylcytidine(34) in tRNA(Ile2) + AMP + 2 phosphate + 2 H(+). ATP-dependent agmatine transferase that catalyzes the formation of 2-agmatinylcytidine (agm2C) at the wobble position (C34) of tRNA(Ile2), converting the codon specificity from AUG to AUA. The protein is tRNA(Ile2) 2-agmatinylcytidine synthetase TiaS of Hyperthermus butylicus (strain DSM 5456 / JCM 9403 / PLM1-5).